The primary structure comprises 463 residues: MEKPSREAFEGNNKLLIGIVLSVITFWLFAQSLVNVVPILEDSFNTDIGTVNIAVSITALFSGMFVVGAGGLADKYGRIKLTNIGIILNILGSLLIIISNIPLLLIIGRLIQGLSAACIMPATLSIIKSYYIGKDRQRALSYWSIGSWGGSGVCSFFGGAVATLLGWRWIFILSIIISLIALFLIKGTPETKSKSISLNKFDIKGLVLLVIMLLSLNILITKGSELGVTSLLFITLLAIAIGSFSLFIVLEKRATNPLIDFKLFKNKAYTGATASNFLLNGVAGTLIVANTFVQRGLGYSSLQAGSLSITYLVMVLIMIRVGEKLLQTLGCKKPMLIGTGVLIVGECLISLTFLPEIFYVICCIIGYLFFGLGLGIYATPSTDTAIANAPLEKVGVAAGIYKMASALGGAFGVALSGAVYAIVSNMTNIYTGAMIALWLNAAMGILSFVIILLLVPKQNDTQL.

14 consecutive transmembrane segments (helical) span residues I17–V37, I53–A73, I86–I106, I107–I127, Y142–A162, L165–I185, F201–T221, S230–L250, T273–V293, Y299–I319, P334–L354, I357–Y377, M403–V423, and I435–V455.

It belongs to the major facilitator superfamily. TCR/Tet family.

The protein localises to the cell membrane. Functionally, multidrug efflux pump that acts independently of NorA and is one of the factors that confers resistance against diverse quinolones and chemical compounds. The polypeptide is Quinolone resistance protein NorB (norB) (Staphylococcus aureus (strain COL)).